We begin with the raw amino-acid sequence, 824 residues long: Glycerol-3-phosphate acyltransferase (824 aa).

The HXXXXD motif motif lies at cysteine 302–methionine 307.

It belongs to the GPAT/DAPAT family.

It is found in the cell inner membrane. It carries out the reaction sn-glycerol 3-phosphate + an acyl-CoA = a 1-acyl-sn-glycero-3-phosphate + CoA. It participates in phospholipid metabolism; CDP-diacylglycerol biosynthesis; CDP-diacylglycerol from sn-glycerol 3-phosphate: step 1/3. The sequence is that of Glycerol-3-phosphate acyltransferase from Actinobacillus pleuropneumoniae serotype 7 (strain AP76).